Here is a 36-residue protein sequence, read N- to C-terminus: Conotoxin Cal6.1h (36 aa).

A propeptide spanning residues 1–7 (GLGRPSR) is cleaved from the precursor. 3 cysteine pairs are disulfide-bonded: Cys-9/Cys-25, Cys-16/Cys-29, and Cys-24/Cys-34.

The protein belongs to the conotoxin O1 superfamily. In terms of tissue distribution, expressed by the venom duct.

The protein resides in the secreted. Probable neurotoxin with unknown target. Possibly targets ion channels. The chain is Conotoxin Cal6.1h from Californiconus californicus (California cone).